Consider the following 339-residue polypeptide: Ornithine carbamoyltransferase (339 aa).

Carbamoyl phosphate contacts are provided by residues 56-59 (STRT), R107, and 134-137 (HPTQ). L-ornithine contacts are provided by residues N168, D232, and 236–237 (SM). Residues 274-275 (CL) and R320 contribute to the carbamoyl phosphate site.

Belongs to the aspartate/ornithine carbamoyltransferase superfamily. OTCase family.

It localises to the cytoplasm. It catalyses the reaction carbamoyl phosphate + L-ornithine = L-citrulline + phosphate + H(+). It participates in amino-acid biosynthesis; L-arginine biosynthesis; L-arginine from L-ornithine and carbamoyl phosphate: step 1/3. Reversibly catalyzes the transfer of the carbamoyl group from carbamoyl phosphate (CP) to the N(epsilon) atom of ornithine (ORN) to produce L-citrulline. In Buchnera aphidicola subsp. Baizongia pistaciae (strain Bp), this protein is Ornithine carbamoyltransferase.